An 89-amino-acid chain; its full sequence is Small ribosomal subunit protein uS14A (89 aa).

The segment at 29–62 is disordered; the sequence is AAGDRTALAKLPRDSNPNRLRLRDQTDGRPRGYM. Residues 49–58 show a composition bias toward basic and acidic residues; sequence RLRDQTDGRP.

It belongs to the universal ribosomal protein uS14 family. In terms of assembly, part of the 30S ribosomal subunit. Contacts proteins S3 and S10.

Binds 16S rRNA, required for the assembly of 30S particles and may also be responsible for determining the conformation of the 16S rRNA at the A site. The sequence is that of Small ribosomal subunit protein uS14A from Enterococcus faecalis (strain ATCC 700802 / V583).